The chain runs to 335 residues: Ubiquinone biosynthesis protein COQ4, mitochondrial (335 aa).

The N-terminal 10 residues, Met-1 to Thr-10, are a transit peptide targeting the mitochondrion. Zn(2+) is bound by residues His-210, Asp-211, His-214, and Glu-226.

This sequence belongs to the COQ4 family. In terms of assembly, component of a multi-subunit COQ enzyme complex, composed of at least COQ3, COQ4, COQ5, COQ6, COQ7 and COQ9. Interacts with COQ3. It depends on Zn(2+) as a cofactor.

Its subcellular location is the mitochondrion inner membrane. It catalyses the reaction 4-hydroxy-3-methoxy-5-(all-trans-hexaprenyl)benzoate + H(+) = 2-methoxy-6-(all-trans-hexaprenyl)phenol + CO2. It functions in the pathway cofactor biosynthesis; ubiquinone biosynthesis. Lyase that catalyzes the C1-decarboxylation of 4-hydroxy-3-methoxy-5-(all-trans-hexaprenyl)benzoic acid into 2-methoxy-6-(all-trans-hexaprenyl)phenol during ubiquinone biosynthesis. This is Ubiquinone biosynthesis protein COQ4, mitochondrial from Saccharomyces cerevisiae (strain RM11-1a) (Baker's yeast).